A 319-amino-acid polypeptide reads, in one-letter code: Ribosomal RNA small subunit methyltransferase H (319 aa).

S-adenosyl-L-methionine contacts are provided by residues 39-41 (GGH), Asp59, Phe83, Asp104, and Gln111.

The protein belongs to the methyltransferase superfamily. RsmH family.

Its subcellular location is the cytoplasm. The catalysed reaction is cytidine(1402) in 16S rRNA + S-adenosyl-L-methionine = N(4)-methylcytidine(1402) in 16S rRNA + S-adenosyl-L-homocysteine + H(+). Functionally, specifically methylates the N4 position of cytidine in position 1402 (C1402) of 16S rRNA. This Ralstonia pickettii (strain 12J) protein is Ribosomal RNA small subunit methyltransferase H.